We begin with the raw amino-acid sequence, 120 residues long: NAD(P)H-quinone oxidoreductase subunit 3, chloroplastic (120 aa).

3 helical membrane passes run 9–29, 64–84, and 88–108; these read IFWT…WISG, MFAL…PWAM, and VLGV…VVGL.

The protein belongs to the complex I subunit 3 family. As to quaternary structure, NDH is composed of at least 16 different subunits, 5 of which are encoded in the nucleus.

It is found in the plastid. It localises to the chloroplast thylakoid membrane. The enzyme catalyses a plastoquinone + NADH + (n+1) H(+)(in) = a plastoquinol + NAD(+) + n H(+)(out). The catalysed reaction is a plastoquinone + NADPH + (n+1) H(+)(in) = a plastoquinol + NADP(+) + n H(+)(out). Functionally, NDH shuttles electrons from NAD(P)H:plastoquinone, via FMN and iron-sulfur (Fe-S) centers, to quinones in the photosynthetic chain and possibly in a chloroplast respiratory chain. The immediate electron acceptor for the enzyme in this species is believed to be plastoquinone. Couples the redox reaction to proton translocation, and thus conserves the redox energy in a proton gradient. The protein is NAD(P)H-quinone oxidoreductase subunit 3, chloroplastic of Brachypodium distachyon (Purple false brome).